We begin with the raw amino-acid sequence, 108 residues long: Small ribosomal subunit protein eS25w (108 aa).

The interval 1–36 (MAPKKDKVPPPSSKPAKSGGGKQKKKKWSKGKQKEK) is disordered. A compositionally biased stretch (basic residues) spans 22 to 31 (KQKKKKWSKG).

The protein belongs to the eukaryotic ribosomal protein eS25 family.

This is Small ribosomal subunit protein eS25w (RPS25E) from Arabidopsis thaliana (Mouse-ear cress).